The primary structure comprises 419 residues: Histidine--tRNA ligase (419 aa).

This sequence belongs to the class-II aminoacyl-tRNA synthetase family. As to quaternary structure, homodimer.

It localises to the cytoplasm. It carries out the reaction tRNA(His) + L-histidine + ATP = L-histidyl-tRNA(His) + AMP + diphosphate + H(+). This chain is Histidine--tRNA ligase, found in Novosphingobium aromaticivorans (strain ATCC 700278 / DSM 12444 / CCUG 56034 / CIP 105152 / NBRC 16084 / F199).